We begin with the raw amino-acid sequence, 88 residues long: YcgL domain-containing protein NTHI1684 (88 aa).

In terms of domain architecture, YcgL spans 1-85 (MLCAIYKSKK…QDDGLFNSLS (85 aa)).

The polypeptide is YcgL domain-containing protein NTHI1684 (Haemophilus influenzae (strain 86-028NP)).